We begin with the raw amino-acid sequence, 163 residues long: MLLAIKDFFNSLLLKELFKGMALTGRYLFARKVTVQFPEEKTPISPRFRGLHALRRYPNGEERCIACKLCEAVCPALAITIESDVRADGTRRTTRYDIDLTKCIFCGFCEEACPVDAVVETPILEYHGEKRGDLYFTKDMLLAVGDRYEPQIAAAKAADAKYR.

4Fe-4S ferredoxin-type domains follow at residues 54–84 (LRRY…IESD) and 94–123 (TRYD…ETPI). The [4Fe-4S] cluster site is built by Cys-64, Cys-67, Cys-70, Cys-74, Cys-103, Cys-106, Cys-109, and Cys-113.

Belongs to the complex I 23 kDa subunit family. In terms of assembly, NDH-1 is composed of 14 different subunits. Subunits NuoA, H, J, K, L, M, N constitute the membrane sector of the complex. [4Fe-4S] cluster is required as a cofactor.

It is found in the cell inner membrane. The enzyme catalyses a quinone + NADH + 5 H(+)(in) = a quinol + NAD(+) + 4 H(+)(out). NDH-1 shuttles electrons from NADH, via FMN and iron-sulfur (Fe-S) centers, to quinones in the respiratory chain. The immediate electron acceptor for the enzyme in this species is believed to be ubiquinone. Couples the redox reaction to proton translocation (for every two electrons transferred, four hydrogen ions are translocated across the cytoplasmic membrane), and thus conserves the redox energy in a proton gradient. The protein is NADH-quinone oxidoreductase subunit I of Cupriavidus pinatubonensis (strain JMP 134 / LMG 1197) (Cupriavidus necator (strain JMP 134)).